A 355-amino-acid chain; its full sequence is Fe-S cluster assembly protein DRE2 (355 aa).

The tract at residues 23 to 156 (TSFNPRTLLL…KPDYSASVAV (134 aa)) is N-terminal SAM-like domain. Residues 157 to 247 (PLRLRRKDNS…EDTLLTEEDM (91 aa)) are linker. Positions 189–214 (RKSVDMTDDVPEKDVPKVDSPKNDAP) are disordered. The span at 190–213 (KSVDMTDDVPEKDVPKVDSPKNDA) shows a compositional bias: basic and acidic residues. C257, C268, C271, and C273 together coordinate [2Fe-2S] cluster. The interval 257–273 (CAPRAGKRRRACKDCTC) is fe-S binding site A. Residues C318, C321, C329, and C332 each contribute to the [4Fe-4S] cluster site. 2 short sequence motifs (cx2C motif) span residues 318 to 321 (CGNC) and 329 to 332 (CDGC). The fe-S binding site B stretch occupies residues 318–332 (CGNCSLGDAFRCDGC).

This sequence belongs to the anamorsin family. Monomer. Interacts with TAH18. Interacts with MIA40. It depends on [2Fe-2S] cluster as a cofactor. [4Fe-4S] cluster is required as a cofactor.

Its subcellular location is the cytoplasm. The protein localises to the mitochondrion intermembrane space. Functionally, component of the cytosolic iron-sulfur (Fe-S) protein assembly (CIA) machinery required for the maturation of extramitochondrial Fe-S proteins. Part of an electron transfer chain functioning in an early step of cytosolic Fe-S biogenesis, facilitating the de novo assembly of a [4Fe-4S] cluster on the scaffold complex CFD1-NBP35. Electrons are transferred to DRE2 from NADPH via the FAD- and FMN-containing protein TAH18. TAH18-DRE2 are also required for the assembly of the diferric tyrosyl radical cofactor of ribonucleotide reductase (RNR), probably by providing electrons for reduction during radical cofactor maturation in the catalytic small subunit RNR2. The protein is Fe-S cluster assembly protein DRE2 of Botryotinia fuckeliana (strain B05.10) (Noble rot fungus).